A 526-amino-acid polypeptide reads, in one-letter code: MMTVATTEELYQRLLKSIREGVDLQPKMVNVGTVIQVGDGVAKISGLEQAMASELLEFPPKAGRSEPVFGIALNLEKDAVSAIILGDYLGIEEGDQVNSTGRVISAPVGQALIGRVVNALGQPIDGKGPIQTTKYRPIERIAPGVITRKSVDTPVQTGIIAIDAMIPIGRGQRELIIGDRQTGKTAVAIDTIINQKGKGMVCIYVAIGQKRAQVAQIINFLEKYGAMDYTIVVSATASESAALQYIAPYAGCAMGEEVMENGVIIDGQEVRDALIVYDDLSKHATAYRQVSLLLRRPPGREAYPGDVFYLHSRLLERAARLNEDYGGGSLTALPIIETQANDVSAYIPTNVISITDGQIYLETDLFNAGIRPALNVGISVSRVGGAAQTRAMRSVSDRLKIDMAQFRDLAAFAQFASDLDATTRAQIERGQRLQEVLKQPQFQPMPLEEQVVILFAGINGYLDDVPINQIGRFKSELVNYMRTAHPEVGKMIFENRLDRKFPSPEIRSAIEHMLKEFKQMSTFAEG.

ATP is bound at residue Gly178–Thr185.

Belongs to the ATPase alpha/beta chains family. F-type ATPases have 2 components, CF(1) - the catalytic core - and CF(0) - the membrane proton channel. CF(1) has five subunits: alpha(3), beta(3), gamma(1), delta(1), epsilon(1). CF(0) has four main subunits: a(1), b(1), b'(1) and c(9-12).

It is found in the cell membrane. It carries out the reaction ATP + H2O + 4 H(+)(in) = ADP + phosphate + 5 H(+)(out). Functionally, produces ATP from ADP in the presence of a proton gradient across the membrane. The alpha chain is a regulatory subunit. The protein is ATP synthase subunit alpha of Roseiflexus castenholzii (strain DSM 13941 / HLO8).